A 473-amino-acid chain; its full sequence is Photosystem II CP43 reaction center protein (473 aa).

Residues 1–14 constitute a propeptide that is removed on maturation; sequence MKTLYSLRRFYPVE. Thr15 is subject to N-acetylthreonine. Thr15 bears the Phosphothreonine mark. The next 5 membrane-spanning stretches (helical) occupy residues 69–93, 134–155, 178–200, 255–275, and 291–312; these read LFEV…PHLA, LLGP…KDRN, KALY…RKIT, KPFA…LSYS, and WFNN…ASQA. Glu367 serves as a coordination point for [CaMn4O5] cluster. Residues 447 to 471 form a helical membrane-spanning segment; that stretch reads RARAAAAGFEKGIDRDFEPVLSMTP.

Belongs to the PsbB/PsbC family. PsbC subfamily. As to quaternary structure, PSII is composed of 1 copy each of membrane proteins PsbA, PsbB, PsbC, PsbD, PsbE, PsbF, PsbH, PsbI, PsbJ, PsbK, PsbL, PsbM, PsbT, PsbX, PsbY, PsbZ, Psb30/Ycf12, at least 3 peripheral proteins of the oxygen-evolving complex and a large number of cofactors. It forms dimeric complexes. Requires Binds multiple chlorophylls and provides some of the ligands for the Ca-4Mn-5O cluster of the oxygen-evolving complex. It may also provide a ligand for a Cl- that is required for oxygen evolution. PSII binds additional chlorophylls, carotenoids and specific lipids. as cofactor.

The protein resides in the plastid. It is found in the chloroplast thylakoid membrane. In terms of biological role, one of the components of the core complex of photosystem II (PSII). It binds chlorophyll and helps catalyze the primary light-induced photochemical processes of PSII. PSII is a light-driven water:plastoquinone oxidoreductase, using light energy to abstract electrons from H(2)O, generating O(2) and a proton gradient subsequently used for ATP formation. This chain is Photosystem II CP43 reaction center protein, found in Vitis vinifera (Grape).